A 116-amino-acid polypeptide reads, in one-letter code: Putative pterin-4-alpha-carbinolamine dehydratase (116 aa).

It belongs to the pterin-4-alpha-carbinolamine dehydratase family.

It carries out the reaction (4aS,6R)-4a-hydroxy-L-erythro-5,6,7,8-tetrahydrobiopterin = (6R)-L-erythro-6,7-dihydrobiopterin + H2O. This is Putative pterin-4-alpha-carbinolamine dehydratase from Xylella fastidiosa (strain 9a5c).